We begin with the raw amino-acid sequence, 58 residues long: uncharacterized protein (58 aa).

Residues 12-32 (VALVYISVYFFSCISLIVYFF) traverse the membrane as a helical segment.

The protein resides in the membrane. This is an uncharacterized protein from Saccharomyces cerevisiae (strain ATCC 204508 / S288c) (Baker's yeast).